The chain runs to 453 residues: Phosphoglucosamine mutase (453 aa).

The active-site Phosphoserine intermediate is serine 108. The Mg(2+) site is built by serine 108, aspartate 247, aspartate 249, and aspartate 251. Serine 108 carries the phosphoserine modification.

The protein belongs to the phosphohexose mutase family. Requires Mg(2+) as cofactor. Post-translationally, activated by phosphorylation.

It carries out the reaction alpha-D-glucosamine 1-phosphate = D-glucosamine 6-phosphate. Catalyzes the conversion of glucosamine-6-phosphate to glucosamine-1-phosphate. This Methylobacillus flagellatus (strain ATCC 51484 / DSM 6875 / VKM B-1610 / KT) protein is Phosphoglucosamine mutase.